A 1320-amino-acid polypeptide reads, in one-letter code: Protein brunelleschi (1320 aa).

The segment at 313–411 (HRNSSLQEAG…IPGHQRNGDL (99 aa)) is disordered. The span at 314–327 (RNSSLQEAGTSPLK) shows a compositional bias: polar residues. Ser-317 carries the phosphoserine modification. Thr-329 carries the phosphothreonine modification. The span at 329 to 340 (TPEKWRASDATK) shows a compositional bias: basic and acidic residues. A compositionally biased stretch (polar residues) spans 345 to 361 (SDATANNVDSNQPQQRV). The span at 362–400 (TSNSSSCSSVSSLVTTATNSSASDTPTTSSSSTSTISAA) shows a compositional bias: low complexity. At Ser-672 the chain carries Phosphoserine. The disordered stretch occupies residues 923 to 954 (VSTSGHASLPSRVGSPHHRRNEPQNSSFRSTI). The segment covering 945 to 954 (PQNSSFRSTI) has biased composition (polar residues).

Belongs to the NIBP family. In terms of assembly, may be part of the multisubunit TRAPP (transport protein particle) complex.

The protein resides in the cytoplasm. Its subcellular location is the golgi apparatus. Its function is as follows. Cooperates with Rab11 and fwd/PI4K to mediate the flow of membrane through the Golgi, which is required to support cleavage furrow ingression, therefore promoting cytokinesis in male meiotic cells. In Drosophila melanogaster (Fruit fly), this protein is Protein brunelleschi.